Reading from the N-terminus, the 800-residue chain is Nucleolar complex protein 3 homolog (800 aa).

2 disordered regions span residues 27 to 93 (KLKN…DMMD) and 160 to 187 (GIIP…RELE). Residues 40–51 (KKYRKEQRKLRQ) are compositionally biased toward basic residues. A compositionally biased stretch (basic and acidic residues) spans 66–78 (NPKEKRPGKRIER). Residues 79–93 (EEEEEEEALPLDMMD) are compositionally biased toward acidic residues. Over residues 160–174 (GIIPQTREKPVTDSN) the composition is skewed to basic and acidic residues. A compositionally biased stretch (acidic residues) spans 175–187 (KDEEDQEEERELE). Lysine 333 participates in a covalent cross-link: Glycyl lysine isopeptide (Lys-Gly) (interchain with G-Cter in SUMO2). Residues 451-490 (KEKRKSLSRMQRKWKKAEEKLERELREAEASESTEKKLKL) are a coiled coil. Serine 787 carries the post-translational modification Phosphoserine.

This sequence belongs to the CBF/MAK21 family. Expressed in colon, heart, kidney, liver, lung, placenta, skeletal muscle, small intestine, spleen and thymus.

The protein resides in the nucleus. It is found in the nucleolus. Its subcellular location is the nucleus speckle. Its function is as follows. May be required for adipogenesis. The polypeptide is Nucleolar complex protein 3 homolog (NOC3L) (Homo sapiens (Human)).